The sequence spans 152 residues: MSSLAFNYIVNLLSRREYSEFELRNKMQEKNFSEEEIDEALSRCQAKNWQSDRRFSENYLNSRVQKGYGVGRIRQELRQLKGVSSDIIDEVLMESEIDWYEMAENLLRKKFPNYNEQQTPKMKQKIWQYMLSHGFRSDEFADLIGQNQSEWD.

The protein belongs to the RecX family.

It is found in the cytoplasm. In terms of biological role, modulates RecA activity. This Haemophilus influenzae (strain PittEE) protein is Regulatory protein RecX.